A 1050-amino-acid chain; its full sequence is DNA-directed RNA polymerase subunit beta (1050 aa).

Belongs to the RNA polymerase beta chain family. In plastids the minimal PEP RNA polymerase catalytic core is composed of four subunits: alpha, beta, beta', and beta''. When a (nuclear-encoded) sigma factor is associated with the core the holoenzyme is formed, which can initiate transcription (Potential).

It localises to the plastid. Its subcellular location is the apicoplast. It catalyses the reaction RNA(n) + a ribonucleoside 5'-triphosphate = RNA(n+1) + diphosphate. In terms of biological role, DNA-dependent RNA polymerase catalyzes the transcription of DNA into RNA using the four ribonucleoside triphosphates as substrates. This chain is DNA-directed RNA polymerase subunit beta (rpoB), found in Neospora caninum (Coccidian parasite).